The following is a 453-amino-acid chain: ATP-dependent protease ATPase subunit HslU (453 aa).

Residues isoleucine 18, 60 to 65 (GVGKTE), aspartate 266, glutamate 331, and arginine 403 each bind ATP.

The protein belongs to the ClpX chaperone family. HslU subfamily. As to quaternary structure, a double ring-shaped homohexamer of HslV is capped on each side by a ring-shaped HslU homohexamer. The assembly of the HslU/HslV complex is dependent on binding of ATP.

It is found in the cytoplasm. ATPase subunit of a proteasome-like degradation complex; this subunit has chaperone activity. The binding of ATP and its subsequent hydrolysis by HslU are essential for unfolding of protein substrates subsequently hydrolyzed by HslV. HslU recognizes the N-terminal part of its protein substrates and unfolds these before they are guided to HslV for hydrolysis. The sequence is that of ATP-dependent protease ATPase subunit HslU from Desulforapulum autotrophicum (strain ATCC 43914 / DSM 3382 / VKM B-1955 / HRM2) (Desulfobacterium autotrophicum).